Reading from the N-terminus, the 636-residue chain is Sodium-dependent nutrient amino acid transporter 1 (636 aa).

The disordered stretch occupies residues 1–40 (MELKTMPQNGANNGNPQGNTSNNNNTNDSSNSNSNNNNKT). Residues 1–50 (MELKTMPQNGANNGNPQGNTSNNNNTNDSSNSNSNNNNKTERTNWSNGLE) are Cytoplasmic-facing. The segment covering 7-40 (PQNGANNGNPQGNTSNNNNTNDSSNSNSNNNNKT) has biased composition (low complexity). The next 3 helical transmembrane spans lie at 51-71 (FLMSCISVSVGLGNIWRFPFT), 78-98 (GAFLIPYIIVLFMIGKPMYYL), and 131-151 (TICIISYYSSLLALTLYYLAV). Asparagine 184 carries N-linked (GlcNAc...) asparagine glycosylation. 9 consecutive transmembrane segments (helical) span residues 225 to 245 (PDWKLTIALFVSWIVIFLVIM), 254 to 274 (AAYFLALFPYVVLFTLLGRAV), 303 to 323 (AVVQCFFSLAVGSGPIIMFSS), 337 to 357 (IVTTLDTLTSLLGGITIFAIL), 397 to 417 (LFSALFFFMLFVLGIGSIVAL), 436 to 456 (VALVTSICGFLMGLVYVTPGG), 469 to 489 (TYVVFILAIFELVGIAWIYGV), 511 to 531 (CWLIFTPIMMIVIFIYSMVTI), and 547 to 567 (VAGWLLFAIGASQFPLWGWWY).

This sequence belongs to the sodium:neurotransmitter symporter (SNF) (TC 2.A.22) family.

It localises to the membrane. In terms of biological role, unusual broad substrate spectrum amino acid:sodium cotransporter that promotes absorption of the D isomers of essential amino acids. Neutral amino acids are the preferred substrates, especially methionine and phenylalanine. This Drosophila grimshawi (Hawaiian fruit fly) protein is Sodium-dependent nutrient amino acid transporter 1.